A 523-amino-acid polypeptide reads, in one-letter code: Type 2 DNA topoisomerase 6 subunit B (523 aa).

Residues Asn48, Asp80, 101 to 102 (SK), 110 to 117 (GQQGLGCS), and Lys436 each bind ATP.

It belongs to the TOP6B family. In terms of assembly, homodimer. Heterotetramer of two Top6A and two Top6B chains.

The enzyme catalyses ATP-dependent breakage, passage and rejoining of double-stranded DNA.. Relaxes both positive and negative superturns and exhibits a strong decatenase activity. The protein is Type 2 DNA topoisomerase 6 subunit B of Methanothermobacter thermautotrophicus (strain ATCC 29096 / DSM 1053 / JCM 10044 / NBRC 100330 / Delta H) (Methanobacterium thermoautotrophicum).